The primary structure comprises 387 residues: Exodeoxyribonuclease 7 large subunit (387 aa).

This sequence belongs to the XseA family. In terms of assembly, heterooligomer composed of large and small subunits.

The protein localises to the cytoplasm. The enzyme catalyses Exonucleolytic cleavage in either 5'- to 3'- or 3'- to 5'-direction to yield nucleoside 5'-phosphates.. Functionally, bidirectionally degrades single-stranded DNA into large acid-insoluble oligonucleotides, which are then degraded further into small acid-soluble oligonucleotides. This Synechococcus sp. (strain CC9605) protein is Exodeoxyribonuclease 7 large subunit.